Here is a 320-residue protein sequence, read N- to C-terminus: ATP-dependent 6-phosphofructokinase (320 aa).

Gly12 provides a ligand contact to ATP. ADP-binding positions include 22-26 and 55-60; these read RGVVR and RYSVSD. ATP-binding positions include 73-74 and 103-106; these read RF and GDGS. Residue Asp104 participates in Mg(2+) binding. 126–128 contributes to the substrate binding site; that stretch reads TID. The active-site Proton acceptor is Asp128. Arg155 provides a ligand contact to ADP. Substrate contacts are provided by residues Arg163 and 170 to 172; that span reads MGR. Residues 186 to 188, Lys212, and 214 to 216 each bind ADP; these read GCE and KKH. Substrate is bound by residues Glu223, Arg244, and 250–253; that span reads HIQR.

This sequence belongs to the phosphofructokinase type A (PFKA) family. ATP-dependent PFK group I subfamily. Prokaryotic clade 'B1' sub-subfamily. As to quaternary structure, homotetramer. It depends on Mg(2+) as a cofactor.

It is found in the cytoplasm. The enzyme catalyses beta-D-fructose 6-phosphate + ATP = beta-D-fructose 1,6-bisphosphate + ADP + H(+). Its pathway is carbohydrate degradation; glycolysis; D-glyceraldehyde 3-phosphate and glycerone phosphate from D-glucose: step 3/4. Its activity is regulated as follows. Allosterically activated by ADP and other diphosphonucleosides, and allosterically inhibited by phosphoenolpyruvate. Its function is as follows. Catalyzes the phosphorylation of D-fructose 6-phosphate to fructose 1,6-bisphosphate by ATP, the first committing step of glycolysis. In Buchnera aphidicola subsp. Schizaphis graminum (strain Sg), this protein is ATP-dependent 6-phosphofructokinase.